Consider the following 187-residue polypeptide: Protein GrpE (187 aa).

Positions 1 to 15 are enriched in basic and acidic residues; the sequence is MKETKQEEMEVREDC. Positions 1–40 are disordered; sequence MKETKQEEMEVREDCESVDSNLEATVEEMESTKGTSEDLE.

Belongs to the GrpE family. As to quaternary structure, homodimer.

It is found in the cytoplasm. In terms of biological role, participates actively in the response to hyperosmotic and heat shock by preventing the aggregation of stress-denatured proteins, in association with DnaK and GrpE. It is the nucleotide exchange factor for DnaK and may function as a thermosensor. Unfolded proteins bind initially to DnaJ; upon interaction with the DnaJ-bound protein, DnaK hydrolyzes its bound ATP, resulting in the formation of a stable complex. GrpE releases ADP from DnaK; ATP binding to DnaK triggers the release of the substrate protein, thus completing the reaction cycle. Several rounds of ATP-dependent interactions between DnaJ, DnaK and GrpE are required for fully efficient folding. The polypeptide is Protein GrpE (Alkaliphilus oremlandii (strain OhILAs) (Clostridium oremlandii (strain OhILAs))).